We begin with the raw amino-acid sequence, 203 residues long: Large ribosomal subunit protein bL25 (203 aa).

Belongs to the bacterial ribosomal protein bL25 family. CTC subfamily. Part of the 50S ribosomal subunit; part of the 5S rRNA/L5/L18/L25 subcomplex. Contacts the 5S rRNA. Binds to the 5S rRNA independently of L5 and L18.

In terms of biological role, this is one of the proteins that binds to the 5S RNA in the ribosome where it forms part of the central protuberance. The polypeptide is Large ribosomal subunit protein bL25 (Paraburkholderia phymatum (strain DSM 17167 / CIP 108236 / LMG 21445 / STM815) (Burkholderia phymatum)).